The following is a 353-amino-acid chain: UDP-3-O-acylglucosamine N-acyltransferase (353 aa).

Histidine 242 (proton acceptor) is an active-site residue.

It belongs to the transferase hexapeptide repeat family. LpxD subfamily. As to quaternary structure, homotrimer.

It carries out the reaction a UDP-3-O-[(3R)-3-hydroxyacyl]-alpha-D-glucosamine + a (3R)-hydroxyacyl-[ACP] = a UDP-2-N,3-O-bis[(3R)-3-hydroxyacyl]-alpha-D-glucosamine + holo-[ACP] + H(+). It functions in the pathway bacterial outer membrane biogenesis; LPS lipid A biosynthesis. Its function is as follows. Catalyzes the N-acylation of UDP-3-O-acylglucosamine using 3-hydroxyacyl-ACP as the acyl donor. Is involved in the biosynthesis of lipid A, a phosphorylated glycolipid that anchors the lipopolysaccharide to the outer membrane of the cell. This is UDP-3-O-acylglucosamine N-acyltransferase from Pseudomonas aeruginosa (strain LESB58).